Consider the following 367-residue polypeptide: DNA replication and repair protein RecF (367 aa).

An ATP-binding site is contributed by 30 to 37 (GANGSGKT).

This sequence belongs to the RecF family.

Its subcellular location is the cytoplasm. Functionally, the RecF protein is involved in DNA metabolism; it is required for DNA replication and normal SOS inducibility. RecF binds preferentially to single-stranded, linear DNA. It also seems to bind ATP. The polypeptide is DNA replication and repair protein RecF (Pseudomonas putida (strain GB-1)).